The chain runs to 340 residues: Dihydroorotase (340 aa).

Zn(2+) is bound by residues His-14 and His-16. Substrate contacts are provided by residues 16–18 and Asn-42; that span reads HLR. 3 residues coordinate Zn(2+): Lys-100, His-137, and His-175. Position 100 is an N6-carboxylysine (Lys-100). His-137 contributes to the substrate binding site. Leu-220 serves as a coordination point for substrate. Asp-248 is a Zn(2+) binding site. The active site involves Asp-248. Positions 252 and 264 each coordinate substrate.

It belongs to the metallo-dependent hydrolases superfamily. DHOase family. Class II DHOase subfamily. Homodimer. Zn(2+) is required as a cofactor.

It catalyses the reaction (S)-dihydroorotate + H2O = N-carbamoyl-L-aspartate + H(+). Its pathway is pyrimidine metabolism; UMP biosynthesis via de novo pathway; (S)-dihydroorotate from bicarbonate: step 3/3. In terms of biological role, catalyzes the reversible cyclization of carbamoyl aspartate to dihydroorotate. This is Dihydroorotase from Sphingopyxis alaskensis (strain DSM 13593 / LMG 18877 / RB2256) (Sphingomonas alaskensis).